A 660-amino-acid polypeptide reads, in one-letter code: Neurexin-2-beta (660 aa).

The span at 1–10 shows a compositional bias: gly residues; that stretch reads MPPGGSGQGG. The interval 1–27 is disordered; that stretch reads MPPGGSGQGGCPRRPPALAGPLPPPPP. The N-terminal stretch at 1-46 is a signal peptide; it reads MPPGGSGQGGCPRRPPALAGPLPPPPPPPPLPLLLGLLLLLGAAEG. At 47-584 the chain is on the extracellular side; it reads ARVSSSLSTT…EVIRESSSTT (538 aa). The region spanning 87–295 is the Laminin G-like domain; sequence TTYIFGKGGA…HLRLVGEGPS (209 aa). The Ca(2+) site is built by D139 and V156. The N-linked (GlcNAc...) asparagine glycan is linked to N186. Residues I238 and N240 each contribute to the Ca(2+) site. Residue S350 is glycosylated (O-linked (Xyl...) (heparan sulfate) serine). Disordered stretches follow at residues 408-458 and 537-571; these read ATQD…LPPT and EPRRPPPLRPGVTSAPGFPRLPTANPTGPGERGPP. Residue N561 is glycosylated (N-linked (GlcNAc...) asparagine). Residues 585-605 form a helical membrane-spanning segment; the sequence is GMVVGIVAAAALCILILLYAM. Topologically, residues 606 to 660 are cytoplasmic; sequence YKYRNRDEGSYQVDQSRNYISNSAQSNGAVVKEKAPAAPKTPSKAKKNKDKEYYV. The tract at residues 627 to 660 is disordered; the sequence is NSAQSNGAVVKEKAPAAPKTPSKAKKNKDKEYYV.

It belongs to the neurexin family. As to quaternary structure, interacts (via cytoplasmic C-terminal region) with CASK. Specific isoforms bind alpha-dystroglycan and neuroligins NLGN1, NLGN2 and NLGN3. Interacts with CBLN1, CBLN2 and, less avidly, with CBLN4. Interacts with CLSTN3. In terms of processing, O-glycosylated; contains heparan sulfate. Heparan sulfate attachment is required for synapse development by mediating interactions with neuroligins.

It is found in the presynaptic cell membrane. Functionally, neuronal cell surface protein that may be involved in cell recognition and cell adhesion. The polypeptide is Neurexin-2-beta (Mus musculus (Mouse)).